A 249-amino-acid polypeptide reads, in one-letter code: Small ribosomal subunit protein uS2 (249 aa).

The protein belongs to the universal ribosomal protein uS2 family.

In Bordetella avium (strain 197N), this protein is Small ribosomal subunit protein uS2.